The sequence spans 509 residues: MLLPWLILIPFIGGFLCWQTERFGVKVPRWIALITMGLTLALSLQLWLQGGYSLTQSAGIPQWQSEFDMPWIPRFGISIHLAIDGLSLLMVVLTGLLGVLAVLCSWKEIEKYQGFFHLNLMWILGGVIGVFLAIDMFLFFFFWEMMLVPMYFLIALWGHKASDGKTRITAATKFFIYTQASGLVMLIAILALVFVHYNATGVWTFNYEELLNTPMSSGVEYLLMLGFFIAFAVKMPVVPLHGWLPDAHSQAPTAGSVDLAGILLKTAAYGLLRFSLPLFPNASAEFAPIAMWLGVIGIFYGAWMAFAQTDIKRLIAYTSVSHMGFVLIAIYTGSQLAYQGAVIQMIAHGLSAAGLFILCGQLYERIHTRDMRMMGGLWSKMKWLPALSLFFAVATLGMPGTGNFVGEFMILFGSFQVVPVITVISTFGLVFASVYSLAMLHRAYFGKAKSQIASQELPGMSLRELFMILLLVVLLVLLGFYPQPILDTSHSAIGNIQQWFVNSVTTTRP.

The helical transmembrane segment at 1–21 (MLLPWLILIPFIGGFLCWQTE) threads the bilayer. Topologically, residues 22–29 (RFGVKVPR) are cytoplasmic. Residues 30–50 (WIALITMGLTLALSLQLWLQG) form a helical membrane-spanning segment. The Periplasmic segment spans residues 51 to 82 (GYSLTQSAGIPQWQSEFDMPWIPRFGISIHLA). The helical transmembrane segment at 83–103 (IDGLSLLMVVLTGLLGVLAVL) threads the bilayer. The Cytoplasmic portion of the chain corresponds to 104–121 (CSWKEIEKYQGFFHLNLM). Residues 122–142 (WILGGVIGVFLAIDMFLFFFF) form a helical membrane-spanning segment. Residues 143–173 (WEMMLVPMYFLIALWGHKASDGKTRITAATK) lie on the Periplasmic side of the membrane. Residues 174–194 (FFIYTQASGLVMLIAILALVF) form a helical membrane-spanning segment. The Cytoplasmic segment spans residues 195 to 221 (VHYNATGVWTFNYEELLNTPMSSGVEY). Residues 222-242 (LLMLGFFIAFAVKMPVVPLHG) form a helical membrane-spanning segment. Topologically, residues 243 to 258 (WLPDAHSQAPTAGSVD) are periplasmic. A helical membrane pass occupies residues 259 to 279 (LAGILLKTAAYGLLRFSLPLF). The Cytoplasmic portion of the chain corresponds to 280 to 285 (PNASAE). A helical membrane pass occupies residues 286-306 (FAPIAMWLGVIGIFYGAWMAF). The Periplasmic segment spans residues 307–313 (AQTDIKR). A helical transmembrane segment spans residues 314-334 (LIAYTSVSHMGFVLIAIYTGS). Residues 335–339 (QLAYQ) are Cytoplasmic-facing. Residues 340-360 (GAVIQMIAHGLSAAGLFILCG) form a helical membrane-spanning segment. Residues 361–382 (QLYERIHTRDMRMMGGLWSKMK) are Periplasmic-facing. Transmembrane regions (helical) follow at residues 383–403 (WLPA…GTGN) and 404–424 (FVGE…ITVI). Position 425 (serine 425) is a topological domain, periplasmic. The helical transmembrane segment at 426-446 (TFGLVFASVYSLAMLHRAYFG) threads the bilayer. The Cytoplasmic portion of the chain corresponds to 447 to 464 (KAKSQIASQELPGMSLRE). A helical membrane pass occupies residues 465–485 (LFMILLLVVLLVLLGFYPQPI). Over 486–509 (LDTSHSAIGNIQQWFVNSVTTTRP) the chain is Periplasmic.

It belongs to the complex I subunit 4 family. In terms of assembly, composed of 13 different subunits. Subunits NuoA, H, J, K, L, M, N constitute the membrane sector of the complex.

It localises to the cell inner membrane. It carries out the reaction a quinone + NADH + 5 H(+)(in) = a quinol + NAD(+) + 4 H(+)(out). Its function is as follows. NDH-1 shuttles electrons from NADH, via FMN and iron-sulfur (Fe-S) centers, to quinones in the respiratory chain. The immediate electron acceptor for the enzyme in this species is believed to be ubiquinone. Couples the redox reaction to proton translocation (for every two electrons transferred, four hydrogen ions are translocated across the cytoplasmic membrane), and thus conserves the redox energy in a proton gradient. The protein is NADH-quinone oxidoreductase subunit M (nuoM) of Escherichia coli O157:H7.